A 601-amino-acid polypeptide reads, in one-letter code: Elongation factor 4 (601 aa).

Positions Asn6–Lys188 constitute a tr-type G domain. Residues Asp18–Thr23 and Asn135–Asp138 contribute to the GTP site.

This sequence belongs to the TRAFAC class translation factor GTPase superfamily. Classic translation factor GTPase family. LepA subfamily.

The protein resides in the cell membrane. It carries out the reaction GTP + H2O = GDP + phosphate + H(+). Its function is as follows. Required for accurate and efficient protein synthesis under certain stress conditions. May act as a fidelity factor of the translation reaction, by catalyzing a one-codon backward translocation of tRNAs on improperly translocated ribosomes. Back-translocation proceeds from a post-translocation (POST) complex to a pre-translocation (PRE) complex, thus giving elongation factor G a second chance to translocate the tRNAs correctly. Binds to ribosomes in a GTP-dependent manner. In Desulforamulus reducens (strain ATCC BAA-1160 / DSM 100696 / MI-1) (Desulfotomaculum reducens), this protein is Elongation factor 4.